The primary structure comprises 35 residues: Alpha-amanitin proprotein 1 (35 aa).

Positions 1–10 (MFDTNATRLP) are excised as a propeptide. Position 11 is a (3R,4R)-4,5-dihydroxyisoleucine; in form alpha-amanitin (Ile11). Ile11 carries the (3R,4S)-4-hydroxyisoleucine; in form gamma-amanitin modification. A cross-link (cyclopeptide (Ile-Pro)) is located at residues 11–18 (IWGIGCNP). A cross-link (2'-cysteinyl-6'-hydroxytryptophan sulfoxide (Trp-Cys)) is located at residues 12-16 (WGIGC). Residue Pro18 is modified to 4-hydroxyproline. The propeptide occupies 19 to 35 (WTAEHVDQTLASGNDIC).

The protein belongs to the MSDIN fungal toxin family. Processed by the macrocyclase-peptidase enzyme POPB to yield a toxic bicyclic octapeptide. POPB first removes 10 residues from the N-terminus. Conformational trapping of the remaining peptide forces the enzyme to release this intermediate rather than proceed to macrocyclization. The enzyme rebinds the remaining peptide in a different conformation and catalyzes macrocyclization of the N-terminal 8 residues.

Functionally, major toxin belonging to the bicyclic octapeptides amatoxins that acts by binding non-competitively to RNA polymerase II and greatly slowing the elongation of transcripts from target promoters. This chain is Alpha-amanitin proprotein 1, found in Galerina marginata (strain CBS 339.88).